We begin with the raw amino-acid sequence, 430 residues long: Enolase (430 aa).

Gln165 lines the (2R)-2-phosphoglycerate pocket. The active-site Proton donor is the Glu207. Residues Asp244, Glu287, and Asp314 each coordinate Mg(2+). (2R)-2-phosphoglycerate is bound by residues Lys339, Arg368, Ser369, and Lys390. The active-site Proton acceptor is the Lys339.

This sequence belongs to the enolase family. In terms of assembly, component of the RNA degradosome, a multiprotein complex involved in RNA processing and mRNA degradation. Requires Mg(2+) as cofactor.

It is found in the cytoplasm. The protein localises to the secreted. Its subcellular location is the cell surface. It catalyses the reaction (2R)-2-phosphoglycerate = phosphoenolpyruvate + H2O. It participates in carbohydrate degradation; glycolysis; pyruvate from D-glyceraldehyde 3-phosphate: step 4/5. Functionally, catalyzes the reversible conversion of 2-phosphoglycerate (2-PG) into phosphoenolpyruvate (PEP). It is essential for the degradation of carbohydrates via glycolysis. In Stenotrophomonas maltophilia (strain K279a), this protein is Enolase.